The following is an 825-amino-acid chain: Quinic acid utilization activator (825 aa).

Residues 1–12 show a composition bias toward polar residues; the sequence is MSSDTRQTSGGN. The interval 1 to 45 is disordered; the sequence is MSSDTRQTSGGNARSKRRLTDAVDEDGRPTATAEDPTSNPKRQRV. Residues 18 to 28 show a composition bias toward basic and acidic residues; it reads RLTDAVDEDGR. A DNA-binding region (zn(2)-C6 fungal-type) is located at residues 49–76; it reads CDSCRSKKDKCDGAQPICSTCASLSRPC. Disordered regions lie at residues 160 to 186, 204 to 224, and 658 to 683; these read EQPE…SSVL, QSPL…TTRL, and GSQR…SLPG. Basic and acidic residues predominate over residues 165-174; the sequence is DQERSARGEI. The span at 658–672 shows a compositional bias: polar residues; the sequence is GSQRRPRHATQQGTH.

It localises to the nucleus. Functionally, transcription activation of genes for enzymes and proteins of quinate metabolism by binding to a 16 base-pair sequence (consensus 5'-GGATAANNNNTTATCC-3') in front of each qut gene. The protein is Quinic acid utilization activator (qutA) of Emericella nidulans (strain FGSC A4 / ATCC 38163 / CBS 112.46 / NRRL 194 / M139) (Aspergillus nidulans).